Here is a 198-residue protein sequence, read N- to C-terminus: Pyridoxal 5'-phosphate synthase subunit PdxT (198 aa).

Position 49 to 51 (49 to 51 (GES)) interacts with L-glutamine. C81 acts as the Nucleophile in catalysis. Residues R113 and 141–142 (IR) contribute to the L-glutamine site. Catalysis depends on charge relay system residues H177 and E179.

Belongs to the glutaminase PdxT/SNO family. In terms of assembly, in the presence of PdxS, forms a dodecamer of heterodimers. Only shows activity in the heterodimer.

The enzyme catalyses aldehydo-D-ribose 5-phosphate + D-glyceraldehyde 3-phosphate + L-glutamine = pyridoxal 5'-phosphate + L-glutamate + phosphate + 3 H2O + H(+). It catalyses the reaction L-glutamine + H2O = L-glutamate + NH4(+). It participates in cofactor biosynthesis; pyridoxal 5'-phosphate biosynthesis. Its function is as follows. Catalyzes the hydrolysis of glutamine to glutamate and ammonia as part of the biosynthesis of pyridoxal 5'-phosphate. The resulting ammonia molecule is channeled to the active site of PdxS. The polypeptide is Pyridoxal 5'-phosphate synthase subunit PdxT (Mycobacterium ulcerans (strain Agy99)).